Reading from the N-terminus, the 412-residue chain is Multifunctional CCA protein (412 aa).

Residues G8 and R11 each coordinate ATP. CTP-binding residues include G8 and R11. The Mg(2+) site is built by D21 and D23. The ATP site is built by R91, R137, and R140. The CTP site is built by R91, R137, and R140. Residues 225–326 (TGIHVMMVID…ADMLQATDAY (102 aa)) form the HD domain.

It belongs to the tRNA nucleotidyltransferase/poly(A) polymerase family. Bacterial CCA-adding enzyme type 1 subfamily. In terms of assembly, monomer. Can also form homodimers and oligomers. Requires Mg(2+) as cofactor. It depends on Ni(2+) as a cofactor.

The enzyme catalyses a tRNA precursor + 2 CTP + ATP = a tRNA with a 3' CCA end + 3 diphosphate. The catalysed reaction is a tRNA with a 3' CCA end + 2 CTP + ATP = a tRNA with a 3' CCACCA end + 3 diphosphate. Its function is as follows. Catalyzes the addition and repair of the essential 3'-terminal CCA sequence in tRNAs without using a nucleic acid template. Adds these three nucleotides in the order of C, C, and A to the tRNA nucleotide-73, using CTP and ATP as substrates and producing inorganic pyrophosphate. tRNA 3'-terminal CCA addition is required both for tRNA processing and repair. Also involved in tRNA surveillance by mediating tandem CCA addition to generate a CCACCA at the 3' terminus of unstable tRNAs. While stable tRNAs receive only 3'-terminal CCA, unstable tRNAs are marked with CCACCA and rapidly degraded. This is Multifunctional CCA protein from Nitrosomonas europaea (strain ATCC 19718 / CIP 103999 / KCTC 2705 / NBRC 14298).